A 228-amino-acid polypeptide reads, in one-letter code: Rab-like protein 2A (228 aa).

GTP contacts are provided by residues glycine 28 to serine 35, aspartate 76 to glutamine 80, and asparagine 133 to aspartate 136. Positions leucine 200–serine 228 are disordered.

It belongs to the small GTPase superfamily. Rab family. In terms of assembly, interacts with IFT27, IFT81, IFT172, ATP6V1E1, HK1, LDHC, MAPRE1 and HSPA2. Expressed in the testis.

Functionally, plays an essential role in male fertility, sperm intra-flagellar transport, and tail assembly. Binds, in a GTP-regulated manner, to a specific set of effector proteins including key proteins involved in cilia development and function and delivers them into the growing sperm tail. In Homo sapiens (Human), this protein is Rab-like protein 2A (RABL2A).